The primary structure comprises 906 residues: Inter-alpha-trypsin inhibitor heavy chain H1 (906 aa).

The N-terminal stretch at 1–22 (MGLRGLLCVCLVSLLALQAVAA) is a signal peptide. A propeptide spanning residues 23-29 (QGSPTRN) is cleaved from the precursor. A VIT domain is found at 32-161 (GGKKRMAVDA…KATFRLTYEE (130 aa)). S-linked (Hex...) cysteine glycosylation occurs at Cys55. Phosphoserine is present on Ser124. The region spanning 287-470 (NVVFVIDISS…QQLQGFYEQV (184 aa)) is the VWFA domain. Phosphothreonine occurs at positions 397 and 402. N-linked (GlcNAc...) asparagine glycosylation is present at Asn583. An O-linked (GalNAc...) serine glycan is attached at Ser643. The O-linked (GalNAc...) threonine glycan is linked to Thr648. Asp667 bears the Aspartate 1-(chondroitin 4-sulfate)-ester mark. Positions 668–906 (PHFLIHVPQK…HTDYIVPDIF (239 aa)) are excised as a propeptide. The N-linked (GlcNAc...) asparagine glycan is linked to Asn745.

This sequence belongs to the ITIH family. As to quaternary structure, I-alpha-I plasma protease inhibitors are assembled from one or two heavy chains (HC) and one light chain, bikunin. Inter-alpha-inhibitor (I-alpha-I) is composed of ITIH1/HC1, ITIH2/HC2 and bikunin. Interacts with TNFAIP6 (via Link and CUB domains). In terms of processing, heavy chains are linked to bikunin via chondroitin 4-sulfate esterified to the alpha-carboxyl of the C-terminal aspartate after propeptide cleavage. The S-linked glycan is composed of two 6-carbon sugars, possibly Glc or Gal.

Its subcellular location is the secreted. May act as a carrier of hyaluronan in serum or as a binding protein between hyaluronan and other matrix protein, including those on cell surfaces in tissues to regulate the localization, synthesis and degradation of hyaluronan which are essential to cells undergoing biological processes. The chain is Inter-alpha-trypsin inhibitor heavy chain H1 (ITIH1) from Bos taurus (Bovine).